Here is a 401-residue protein sequence, read N- to C-terminus: Bifunctional sugar-1-phosphate nucleotidylyltransferase/acetyltransferase (401 aa).

The nucleotidylyltransferase stretch occupies residues 1–220 (MKAFILAAGS…KPWNIIDVNK (220 aa)). A ribonucleoside 5'-triphosphate is bound by residues 8-13 (AGSGER), Q73, and G79. Positions 80, 97, 131, 146, and 157 each coordinate N-acetyl-alpha-D-glucosamine 1-phosphate. Residues 236-401 (EDNVKIKGKV…DVGYGEFFKV (166 aa)) form an acetyltransferase region.

In the N-terminal section; belongs to the N-acetylglucosamine-1-phosphate uridyltransferase family. It in the C-terminal section; belongs to the transferase hexapeptide repeat family. Homotrimer. Co(2+) is required as a cofactor. It depends on Mn(2+) as a cofactor.

It carries out the reaction dTTP + alpha-D-glucose 1-phosphate + H(+) = dTDP-alpha-D-glucose + diphosphate. It catalyses the reaction alpha-D-glucose 1-phosphate + UTP + H(+) = UDP-alpha-D-glucose + diphosphate. The catalysed reaction is N-acetyl-alpha-D-galactosamine 1-phosphate + UTP + H(+) = UDP-N-acetyl-alpha-D-galactosamine + diphosphate. The enzyme catalyses N-acetyl-alpha-D-glucosamine 1-phosphate + UTP + H(+) = UDP-N-acetyl-alpha-D-glucosamine + diphosphate. It carries out the reaction alpha-D-galactosamine 1-phosphate + acetyl-CoA = N-acetyl-alpha-D-galactosamine 1-phosphate + CoA + H(+). It catalyses the reaction alpha-D-glucosamine 1-phosphate + acetyl-CoA = N-acetyl-alpha-D-glucosamine 1-phosphate + CoA + H(+). Its pathway is nucleotide-sugar biosynthesis; UDP-N-acetyl-alpha-D-glucosamine biosynthesis; N-acetyl-alpha-D-glucosamine 1-phosphate from alpha-D-glucosamine 6-phosphate (route II): step 2/2. The protein operates within nucleotide-sugar biosynthesis; UDP-N-acetyl-alpha-D-glucosamine biosynthesis; UDP-N-acetyl-alpha-D-glucosamine from N-acetyl-alpha-D-glucosamine 1-phosphate: step 1/1. With respect to regulation, glcN-1-P acetyltransferase activity is inhibited by divalent cations. GalN-1-P acetyltransferase activity is enhanced by Co(2+), Mg(2+) and Ca(2+), but inhibited by Zn(2+) or Mn(2+). Functionally, bifunctional enzyme involved in the synthesis of UDP-N-acetylglucosamine (UDP-GlcNAc) and UDP-N-acetylgalactosamine (UDP-GalNAc). It has multiple amino-sugar-1-phosphate acetyltransferase activities, including glucosamine-1-phosphate (GlcN-1-P) acetyltransferase and galactosamine-1-phosphate (GalN-1-P) acetyltransferase activities, and multiple sugar-1-phosphate nucleotidylyltransferase activities, including N-acetylglucosamine-1-phosphate (GlcNAc-1-P) uridyltransferase and N-acetylgalactosamine-1-phosphate (GalNAc-1-P) uridyltransferase activities. Also catalyzes the formation of dTDP-glucose from dTTP and glucose-1-phosphate (Glc-1-P), and the reverse reaction, which produces dTTP from dTDP-glucose and diphosphate. Can also catalyze the formation of UDP-glucose from UTP and glucose-1-phosphate. This Sulfurisphaera tokodaii (strain DSM 16993 / JCM 10545 / NBRC 100140 / 7) (Sulfolobus tokodaii) protein is Bifunctional sugar-1-phosphate nucleotidylyltransferase/acetyltransferase.